The chain runs to 1059 residues: Zinc finger protein 628 (1059 aa).

6 consecutive C2H2-type zinc fingers follow at residues 36 to 58 (YECGECGKSFRWSSRLLHHQRTH), 64 to 86 (YKCPDCPKAFKGSSALLYHQRGH), 92 to 114 (YQCPDCPKAFKRSSLLQIHRSVH), 120 to 142 (FICGQCGLAFKWSSHYQYHLRQH), 148 to 170 (YPCPDCPKAFKNSSSLRRHRHVH), and 176 to 198 (YTCGVCGKSFTQSTNLRQHQRVH). Thr-199 carries the phosphothreonine modification. The segment at 204–226 (FRCPLCPKTFTHSSNLLLHQRTH) adopts a C2H2-type 7 zinc-finger fold. Disordered regions lie at residues 226–247 (HGAAPAPGTASAAPPPQSREPG), 260–280 (LQPHSPPAPPAPPPPPPPVVP), and 312–351 (EHQPCPGPDAAPQPQEAPAEAPKADQPPSPLPQPPPPAAA). Residues 228–237 (AAPAPGTASA) are compositionally biased toward low complexity. Positions 263–279 (HSPPAPPAPPPPPPPVV) are enriched in pro residues. Positions 323-335 (PQPQEAPAEAPKA) are enriched in low complexity. The segment covering 336–351 (DQPPSPLPQPPPPAAA) has biased composition (pro residues). 7 C2H2-type zinc fingers span residues 356-378 (FACLPCGKSFRTVAGLSRHQHSH), 386-408 (FRCGSCDGSFPQLASLLAHQQCH), 454-476 (YKCAECGKSFKGSSGLRYHLRDH), 482-504 (YQCGECGKAFKRSSLLAIHQRVH), 510-532 (FTCGQCGLTFKWSSHYQYHLRLH), 538-560 (YACGECGKAFRNTSCLRRHRHVH), and 566-588 (HACGVCGKSFAQTSNLRQHQRVH). Thr-589 carries the phosphothreonine modification. C2H2-type zinc fingers lie at residues 594 to 616 (FRCPLCPKTFTHSSNLLLHQRTH) and 622 to 644 (FTCPICGRGFVMAAYLQRHLRTH). The segment covering 644–658 (HAPANTPPSTTAPAA) has biased composition (low complexity). The disordered stretch occupies residues 644–674 (HAPANTPPSTTAPAAGPQPPAPLAAARAPPA). 4 tandem repeats follow at residues 818-831 (VQLQPLRPAPEVTT), 832-842 (VQLQPAQEVTT), 843-853 (VQLQPAQEVTT), and 854-864 (VQLQPAQEVTT). The segment at 818 to 864 (VQLQPLRPAPEVTTVQLQPAQEVTTVQLQPAQEVTTVQLQPAQEVTT) is 4 X approximate tandem repeats. An interaction with TAF4B region spans residues 943–1059 (DGEQTRLCVQ…LPAVQLVHTF (117 aa)).

Interacts with TAF4B.

The protein resides in the nucleus. Transcriptional activator. Binds DNA on GT-box consensus sequence 5'-TTGGTT-3'. Plays a role in spermiogenesis. The sequence is that of Zinc finger protein 628 (ZNF628) from Homo sapiens (Human).